A 451-amino-acid chain; its full sequence is Metalloprotease MJ0996 (451 aa).

It belongs to the peptidase U62 family.

In terms of biological role, probable metalloprotease. The sequence is that of Metalloprotease MJ0996 from Methanocaldococcus jannaschii (strain ATCC 43067 / DSM 2661 / JAL-1 / JCM 10045 / NBRC 100440) (Methanococcus jannaschii).